The sequence spans 182 residues: Large ribosomal subunit protein bL17 (182 aa).

A disordered region spans residues 126-182 (ERANRVAASKAKKAEAEAAEAKAEEAEEAPEVEADTATDKAAEAEAAEAADEAAEDK). Residues 137–149 (KKAEAEAAEAKAE) show a composition bias toward basic and acidic residues. Composition is skewed to acidic residues over residues 150-161 (EAEEAPEVEADT) and 170-182 (EAAE…AEDK).

It belongs to the bacterial ribosomal protein bL17 family. In terms of assembly, part of the 50S ribosomal subunit. Contacts protein L32.

This is Large ribosomal subunit protein bL17 from Corynebacterium jeikeium (strain K411).